We begin with the raw amino-acid sequence, 661 residues long: Peroxisomal acyl-coenzyme A oxidase 1 (661 aa).

Ser26 bears the Phosphoserine mark. An N6-acetyllysine modification is found at Lys65. Lys89 and Lys90 each carry N6-succinyllysine. Thr139 contacts FAD. Lys159 is modified (N6-succinyllysine). Position 178 (Gly178) interacts with FAD. Lys216 carries the post-translational modification N6-acetyllysine. Lys241 is subject to N6-succinyllysine. An N6-acetyllysine mark is found at Lys255, Lys267, and Lys272. The residue at position 349 (Lys349) is an N6-succinyllysine. Residue Glu421 is the Proton acceptor of the active site. An N6-acetyllysine; alternate mark is found at Lys437 and Lys446. Lys437 and Lys446 each carry N6-succinyllysine; alternate. Lys500 is modified (N6-acetyllysine). Lys512 is modified (N6-acetyllysine; alternate). An N6-succinyllysine; alternate modification is found at Lys512. Lys542 carries the post-translational modification N6-succinyllysine. Lys637 is subject to N6-acetyllysine; alternate. At Lys637 the chain carries N6-succinyllysine; alternate. Residue Lys643 is modified to N6-succinyllysine. Ser649 carries the post-translational modification Phosphoserine. Lys652 bears the N6-acetyllysine mark. The residue at position 655 (Lys655) is an N6-succinyllysine. The Microbody targeting signal signature appears at 659–661; sequence SKL.

The protein belongs to the acyl-CoA oxidase family. Homodimer. The enzyme contains three components A, B and C, the latter two being produced from the first by a proteolytic cleavage. Interacts with LONP2. Requires FAD as cofactor. As to expression, expressed in Schwann cells. Expressed (at protein level) in liver.

The protein resides in the peroxisome. The enzyme catalyses a 2,3-saturated acyl-CoA + O2 = a (2E)-enoyl-CoA + H2O2. It catalyses the reaction hexadecanoyl-CoA + O2 = (2E)-hexadecenoyl-CoA + H2O2. The catalysed reaction is dodecanoyl-CoA + O2 = (2E)-dodecenoyl-CoA + H2O2. It carries out the reaction octanoyl-CoA + O2 = (2E)-octenoyl-CoA + H2O2. The enzyme catalyses decanoyl-CoA + O2 = (2E)-decenoyl-CoA + H2O2. It catalyses the reaction tetradecanoyl-CoA + O2 = (2E)-tetradecenoyl-CoA + H2O2. The catalysed reaction is hexadecanedioyl-CoA + O2 = (2E)-hexadecenedioyl-CoA + H2O2. It carries out the reaction tetracosanoyl-CoA + O2 = (2E)-tetracosenoyl-CoA + H2O2. The enzyme catalyses glutaryl-CoA + O2 = (2E)-glutaconyl-CoA + H2O2. It catalyses the reaction hexanoyl-CoA + O2 = (2E)-hexenoyl-CoA + H2O2. The catalysed reaction is octadecanoyl-CoA + O2 = (2E)-octadecenoyl-CoA + H2O2. It carries out the reaction (5Z,8Z,11Z,14Z,17Z)-eicosapentaenoyl-CoA + O2 = (2E,5Z,8Z,11Z,14Z,17Z)-icosahexaenoyl-CoA + H2O2. The enzyme catalyses (6Z,9Z,12Z,15Z,18Z,21Z)-tetracosahexaenoyl-CoA + O2 = (2E,6Z,9Z,12Z,15Z,18Z,21Z)-tetracosaheptaenoyl-CoA + H2O2. It functions in the pathway lipid metabolism; peroxisomal fatty acid beta-oxidation. Its function is as follows. Involved in the initial and rate-limiting step of peroxisomal beta-oxidation of straight-chain saturated and unsaturated very-long-chain fatty acids. Catalyzes the desaturation of fatty acyl-CoAs such as palmitoyl-CoA (hexadecanoyl-CoA) to 2-trans-enoyl-CoAs ((2E)-enoyl-CoAs) such as (2E)-hexadecenoyl-CoA, and donates electrons directly to molecular oxygen (O(2)), thereby producing hydrogen peroxide (H(2)O(2)). In terms of biological role, shows highest activity against medium-chain fatty acyl-CoAs. Shows optimum activity with a chain length of 10 carbons (decanoyl-CoA) in vitro. Is active against a much broader range of substrates and shows activity towards long-chain acyl-CoAs. The polypeptide is Peroxisomal acyl-coenzyme A oxidase 1 (Rattus norvegicus (Rat)).